Consider the following 490-residue polypeptide: UDP-N-acetylmuramate--L-alanine ligase (490 aa).

ATP is bound at residue glycine 122–serine 128.

It belongs to the MurCDEF family.

Its subcellular location is the cytoplasm. It catalyses the reaction UDP-N-acetyl-alpha-D-muramate + L-alanine + ATP = UDP-N-acetyl-alpha-D-muramoyl-L-alanine + ADP + phosphate + H(+). It functions in the pathway cell wall biogenesis; peptidoglycan biosynthesis. In terms of biological role, cell wall formation. In Mycobacteroides abscessus (strain ATCC 19977 / DSM 44196 / CCUG 20993 / CIP 104536 / JCM 13569 / NCTC 13031 / TMC 1543 / L948) (Mycobacterium abscessus), this protein is UDP-N-acetylmuramate--L-alanine ligase.